The sequence spans 299 residues: Pyridoxal 5'-phosphate synthase subunit PdxS (299 aa).

Residue Asp-24 coordinates D-ribose 5-phosphate. Lys-81 functions as the Schiff-base intermediate with D-ribose 5-phosphate in the catalytic mechanism. Residue Gly-153 coordinates D-ribose 5-phosphate. Arg-165 serves as a coordination point for D-glyceraldehyde 3-phosphate. Residues Gly-219 and 240-241 (GS) each bind D-ribose 5-phosphate.

The protein belongs to the PdxS/SNZ family. In terms of assembly, in the presence of PdxT, forms a dodecamer of heterodimers.

It catalyses the reaction aldehydo-D-ribose 5-phosphate + D-glyceraldehyde 3-phosphate + L-glutamine = pyridoxal 5'-phosphate + L-glutamate + phosphate + 3 H2O + H(+). It participates in cofactor biosynthesis; pyridoxal 5'-phosphate biosynthesis. In terms of biological role, catalyzes the formation of pyridoxal 5'-phosphate from ribose 5-phosphate (RBP), glyceraldehyde 3-phosphate (G3P) and ammonia. The ammonia is provided by the PdxT subunit. Can also use ribulose 5-phosphate and dihydroxyacetone phosphate as substrates, resulting from enzyme-catalyzed isomerization of RBP and G3P, respectively. This is Pyridoxal 5'-phosphate synthase subunit PdxS from Methanococcus maripaludis (strain DSM 14266 / JCM 13030 / NBRC 101832 / S2 / LL).